Here is a 522-residue protein sequence, read N- to C-terminus: Lysine--tRNA ligase (522 aa).

A 'HIGH' region motif is present at residues 44–52 (PSGLPHIGT). Positions 290 to 294 (KISKS) match the 'KMSKS' region motif. Lys293 is an ATP binding site.

It belongs to the class-I aminoacyl-tRNA synthetase family.

The protein resides in the cytoplasm. The catalysed reaction is tRNA(Lys) + L-lysine + ATP = L-lysyl-tRNA(Lys) + AMP + diphosphate. In Rickettsia bellii (strain OSU 85-389), this protein is Lysine--tRNA ligase.